The primary structure comprises 625 residues: RecQ-mediated genome instability protein 1 (625 aa).

M1 carries the N-acetylmethionine modification. S225 carries the post-translational modification Phosphoserine. Residues 257-282 (LTANNDTSSERCFTTGSSSNTIPTRQ) form a disordered region. Residues S284 and S292 each carry the phosphoserine modification. Residues K334, K387, and K426 each participate in a glycyl lysine isopeptide (Lys-Gly) (interchain with G-Cter in SUMO2) cross-link.

Belongs to the RMI1 family. As to quaternary structure, component of the RMI complex, containing at least TOP3A, RMI1 and RMI2. The RMI complex interacts with BLM. Directly interacts with RMI2 and TOP3A. May bind DHJ. Interacts (via N-terminal region) with BLM; the interaction is direct.

It localises to the nucleus. Its function is as follows. Essential component of the RMI complex, a complex that plays an important role in the processing of homologous recombination intermediates to limit DNA crossover formation in cells. Promotes TOP3A binding to double Holliday junctions (DHJ) and hence stimulates TOP3A-mediated dissolution. Required for BLM phosphorylation during mitosis. Within the BLM complex, required for BLM and TOP3A stability. This chain is RecQ-mediated genome instability protein 1 (RMI1), found in Homo sapiens (Human).